The following is a 206-amino-acid chain: MPKVDLFNQNGEKVGDLQLADSVFGVEVNTYAMHQVVKALLANKRQGTQSAKTRAEVSGGGIKPWRQKGTGRARQGSIRAPQWIHGGVVFAPKPRDYRMSIPKSMKKVAIKSALTSKVNENLMVVVDEIKLETPKTKEVVKMLNSFNAKKTLIITNNAEENVYKSARNIEGVQIIPVNNINVYDVLKYDKVVITKDAVSKIEEVYA.

The tract at residues 47-75 (GTQSAKTRAEVSGGGIKPWRQKGTGRARQ) is disordered.

It belongs to the universal ribosomal protein uL4 family. Part of the 50S ribosomal subunit.

One of the primary rRNA binding proteins, this protein initially binds near the 5'-end of the 23S rRNA. It is important during the early stages of 50S assembly. It makes multiple contacts with different domains of the 23S rRNA in the assembled 50S subunit and ribosome. In terms of biological role, forms part of the polypeptide exit tunnel. The chain is Large ribosomal subunit protein uL4 from Clostridium botulinum (strain ATCC 19397 / Type A).